A 438-amino-acid chain; its full sequence is MESMNVKYPVEYLIEHLNSFESPEVAVESLRKEGIMCKNRGDLYMFKYHLGCKFDKIYHLACRGAILRKTDSGWKVLSYPFDKFFNWGEELQPEIVNYYQTLRYASPLNEKRKAGFMFKLPMKLVEKLDGTCVVLYYDEGWKIHTLGSIDANGSIVKNGMVTTHMDKTYRELFWETFEKKYPPYLLYHLNSSYCYIFEMVHPDARVVVPYEEPNIILIGVRSVDPEKGYFEVGPSEEAVRIFNESGGKINLKLPAVLSQEQNYTLFRANRLQELFEEVTPLFKSLRDGYEVVYEGFVAVQEIAPRVYYRTKIKHPVYLELHRIKTTITPEKLADLFLENKLDDFVLTPDEQETVMKLKEIYTDMRNQLESSFDTIYKEISEQVSPEENPGEFRKRFALRLMDYHDKSWFFARLDGDEEKMQKSEKKLLTERIEKGLFK.

Y48, R63, and K83 together coordinate ATP. K127 serves as the catalytic N6-AMP-lysine intermediate. Residues E198, K311, and K313 each contribute to the ATP site. Residue D342 participates in Mg(2+) binding.

Mg(2+) is required as a cofactor. Mn(2+) serves as cofactor.

Its function is as follows. Involved in countering a host defense mechanism which, following viral infection, activates the host induced anticodon nuclease and shuts off viral translation. Repairs 5'-PO4 and 3'-OH groups in the cleaved host tRNA. The protein is RNA ligase of Rhodothermus phage RM378 (Bacteriophage RM378).